The chain runs to 194 residues: Imidazoleglycerol-phosphate dehydratase (194 aa).

It belongs to the imidazoleglycerol-phosphate dehydratase family.

The protein resides in the cytoplasm. The catalysed reaction is D-erythro-1-(imidazol-4-yl)glycerol 3-phosphate = 3-(imidazol-4-yl)-2-oxopropyl phosphate + H2O. It functions in the pathway amino-acid biosynthesis; L-histidine biosynthesis; L-histidine from 5-phospho-alpha-D-ribose 1-diphosphate: step 6/9. This Lacticaseibacillus paracasei (strain ATCC 334 / BCRC 17002 / CCUG 31169 / CIP 107868 / KCTC 3260 / NRRL B-441) (Lactobacillus paracasei) protein is Imidazoleglycerol-phosphate dehydratase.